A 271-amino-acid chain; its full sequence is Eukaryotic translation initiation factor 3 subunit G (271 aa).

Disordered regions lie at residues 1 to 26 (MSTTVIGSWADAGDEFSAPDITTNPD), 63 to 119 (AQRK…AQKL), and 147 to 187 (TTSS…RDDS). Ser77 carries the phosphoserine modification. The RRM domain occupies 188–267 (TTLKVSQLNS…LILHLEWSKK (80 aa)).

The protein belongs to the eIF-3 subunit G family. As to quaternary structure, component of the eukaryotic translation initiation factor 3 (eIF-3) complex.

It localises to the cytoplasm. Its function is as follows. RNA-binding component of the eukaryotic translation initiation factor 3 (eIF-3) complex, which is involved in protein synthesis of a specialized repertoire of mRNAs and, together with other initiation factors, stimulates binding of mRNA and methionyl-tRNAi to the 40S ribosome. The eIF-3 complex specifically targets and initiates translation of a subset of mRNAs involved in cell proliferation. This subunit can bind 18S rRNA. The protein is Eukaryotic translation initiation factor 3 subunit G of Scheffersomyces stipitis (strain ATCC 58785 / CBS 6054 / NBRC 10063 / NRRL Y-11545) (Yeast).